A 149-amino-acid polypeptide reads, in one-letter code: UPF0178 protein CPR_2251 (149 aa).

This sequence belongs to the UPF0178 family.

The polypeptide is UPF0178 protein CPR_2251 (Clostridium perfringens (strain SM101 / Type A)).